The sequence spans 469 residues: Ribulose bisphosphate carboxylase large chain (469 aa).

Lys-7 carries the N6,N6,N6-trimethyllysine modification. Substrate contacts are provided by Asn-116 and Thr-166. The Proton acceptor role is filled by Lys-168. Lys-170 provides a ligand contact to substrate. Residues Lys-194, Asp-196, and Glu-197 each coordinate Mg(2+). Lys-194 carries the N6-carboxylysine modification. Residue His-287 is the Proton acceptor of the active site. Substrate contacts are provided by Arg-288, His-320, and Ser-372.

The protein belongs to the RuBisCO large chain family. Type I subfamily. Heterohexadecamer of 8 large chains and 8 small chains; disulfide-linked. The disulfide link is formed within the large subunit homodimers. It depends on Mg(2+) as a cofactor. Post-translationally, the disulfide bond which can form in the large chain dimeric partners within the hexadecamer appears to be associated with oxidative stress and protein turnover.

The protein localises to the plastid. It is found in the chloroplast. It carries out the reaction 2 (2R)-3-phosphoglycerate + 2 H(+) = D-ribulose 1,5-bisphosphate + CO2 + H2O. The catalysed reaction is D-ribulose 1,5-bisphosphate + O2 = 2-phosphoglycolate + (2R)-3-phosphoglycerate + 2 H(+). In terms of biological role, ruBisCO catalyzes two reactions: the carboxylation of D-ribulose 1,5-bisphosphate, the primary event in carbon dioxide fixation, as well as the oxidative fragmentation of the pentose substrate in the photorespiration process. Both reactions occur simultaneously and in competition at the same active site. The sequence is that of Ribulose bisphosphate carboxylase large chain from Pachira aquatica (Guiana chestnut).